The chain runs to 465 residues: Crh-like protein ARB_05253 (465 aa).

A signal peptide spans 1-21 (MKLSLAAALLGALAVSAQTST). The region spanning 22 to 223 (ECNPLKQKCP…WAGGETDFSK (202 aa)) is the GH16 domain. Cys23 and Cys30 are oxidised to a cystine. Glu114 (nucleophile) is an active-site residue. Glu118 functions as the Proton donor in the catalytic mechanism. Glu118, Trp200, and Thr211 together coordinate chitin. Disordered stretches follow at residues 261–325 (GQVN…STMT) and 339–442 (TGTG…PGST). N-linked (GlcNAc...) asparagine glycosylation is present at Asn264. Residues 277 to 287 (SSTLPSSPSTS) show a composition bias toward low complexity. A compositionally biased stretch (polar residues) spans 304 to 325 (QAPNTGSSPSNTLTNGPSSTMT). Low complexity-rich tracts occupy residues 339-348 (TGTGGVVTPT), 361-376 (TSRS…SASS), and 383-397 (MTTS…TGTG). Residue Ser441 is the site of GPI-anchor amidated serine attachment. Positions 442–465 (TGAIHSVSNALLLSFCAIAAWALV) are cleaved as a propeptide — removed in mature form.

It belongs to the glycosyl hydrolase 16 family. CRH1 subfamily. In terms of processing, the GPI-anchor is attached to the protein in the endoplasmic reticulum and serves to target the protein to the cell surface. There, the glucosamine-inositol phospholipid moiety is cleaved off and the GPI-modified mannoprotein is covalently attached via its lipidless GPI glycan remnant to the 1,6-beta-glucan of the outer cell wall layer.

The protein resides in the secreted. It localises to the cell wall. Its subcellular location is the membrane. It catalyses the reaction Random endo-hydrolysis of N-acetyl-beta-D-glucosaminide (1-&gt;4)-beta-linkages in chitin and chitodextrins.. Its function is as follows. Dual chitinase/transglycosylase that plays a role in cell wall architecture. Chitinase and transglycosylase activities are coupled. Required for the polysaccharide cross-linking at the septa and the cell wall. More specifically, transfers chitin to 1,6-beta-glucan in the cell wall. The protein is Crh-like protein ARB_05253 of Arthroderma benhamiae (strain ATCC MYA-4681 / CBS 112371) (Trichophyton mentagrophytes).